We begin with the raw amino-acid sequence, 957 residues long: Vacuolar membrane protease (957 aa).

Topologically, residues Met-1–Thr-10 are cytoplasmic. The helical transmembrane segment at Pro-11 to Val-31 threads the bilayer. Residues Thr-32–Thr-369 lie on the Vacuolar side of the membrane. N-linked (GlcNAc...) asparagine glycans are attached at residues Asn-48, Asn-105, and Asn-136. Zn(2+) is bound by residues His-152 and Asp-164. The active-site Proton acceptor is the Glu-198. The Zn(2+) site is built by Glu-199, Glu-224, and His-297. The chain crosses the membrane as a helical span at residues Leu-370 to Phe-390. Over Gly-391–Gly-423 the chain is Cytoplasmic. The chain crosses the membrane as a helical span at residues Phe-424–Leu-444. The Vacuolar portion of the chain corresponds to Leu-445–Ala-450. A helical transmembrane segment spans residues Phe-451–Val-471. Residues Ala-472–Met-490 lie on the Cytoplasmic side of the membrane. A helical transmembrane segment spans residues Tyr-491–Val-511. At Asn-512–Pro-521 the chain is on the vacuolar side. A helical transmembrane segment spans residues Ala-522–Phe-542. At Ala-543–Lys-642 the chain is on the cytoplasmic side. 2 disordered regions span residues Ser-559–Asp-586 and Phe-603–Leu-627. Over residues Phe-603 to Ala-613 the composition is skewed to basic and acidic residues. Residues Leu-643 to Val-663 form a helical membrane-spanning segment. The Vacuolar segment spans residues Gly-664–Leu-685. The chain crosses the membrane as a helical span at residues Phe-686–Ile-706. The Cytoplasmic segment spans residues His-707 to Val-713. The helical transmembrane segment at Pro-714 to Phe-734 threads the bilayer. Over Ser-735–Ile-957 the chain is Vacuolar. 3 N-linked (GlcNAc...) asparagine glycosylation sites follow: Asn-782, Asn-818, and Asn-834.

Belongs to the peptidase M28 family. Requires Zn(2+) as cofactor.

Its subcellular location is the vacuole membrane. May be involved in vacuolar sorting and osmoregulation. In Pyrenophora teres f. teres (strain 0-1) (Barley net blotch fungus), this protein is Vacuolar membrane protease.